A 448-amino-acid polypeptide reads, in one-letter code: N-succinylarginine dihydrolase (448 aa).

Substrate contacts are provided by residues 19–28 (GGLSYGNVAS), Asn-110, and 137–138 (HR). Residue Glu-174 is part of the active site. Residue Arg-214 coordinates substrate. The active site involves His-250. Residues Asp-252 and Asn-365 each coordinate substrate. Cys-371 functions as the Nucleophile in the catalytic mechanism.

It belongs to the succinylarginine dihydrolase family. Homodimer.

It carries out the reaction N(2)-succinyl-L-arginine + 2 H2O + 2 H(+) = N(2)-succinyl-L-ornithine + 2 NH4(+) + CO2. The protein operates within amino-acid degradation; L-arginine degradation via AST pathway; L-glutamate and succinate from L-arginine: step 2/5. Catalyzes the hydrolysis of N(2)-succinylarginine into N(2)-succinylornithine, ammonia and CO(2). The polypeptide is N-succinylarginine dihydrolase (Pseudomonas fluorescens (strain ATCC BAA-477 / NRRL B-23932 / Pf-5)).